The chain runs to 260 residues: Small ribosomal subunit protein uS2 (260 aa).

The protein belongs to the universal ribosomal protein uS2 family.

In Mesorhizobium japonicum (strain LMG 29417 / CECT 9101 / MAFF 303099) (Mesorhizobium loti (strain MAFF 303099)), this protein is Small ribosomal subunit protein uS2.